We begin with the raw amino-acid sequence, 152 residues long: Sec-independent protein translocase protein TatB (152 aa).

A helical transmembrane segment spans residues 1 to 21; it reads MLDVGFGELFCFGIIALLVLG.

This sequence belongs to the TatB family. The Tat system comprises two distinct complexes: a TatABC complex, containing multiple copies of TatA, TatB and TatC subunits, and a separate TatA complex, containing only TatA subunits. Substrates initially bind to the TatABC complex, which probably triggers association of the separate TatA complex to form the active translocon.

The protein localises to the cell inner membrane. Its function is as follows. Part of the twin-arginine translocation (Tat) system that transports large folded proteins containing a characteristic twin-arginine motif in their signal peptide across membranes. Together with TatC, TatB is part of a receptor directly interacting with Tat signal peptides. TatB may form an oligomeric binding site that transiently accommodates folded Tat precursor proteins before their translocation. This is Sec-independent protein translocase protein TatB from Acinetobacter baylyi (strain ATCC 33305 / BD413 / ADP1).